Consider the following 161-residue polypeptide: Nucleotide-binding protein PputGB1_4497 (161 aa).

It belongs to the YajQ family.

In terms of biological role, nucleotide-binding protein. This chain is Nucleotide-binding protein PputGB1_4497, found in Pseudomonas putida (strain GB-1).